Reading from the N-terminus, the 395-residue chain is Syncephapepsin (395 aa).

Positions 1–19 are cleaved as a signal peptide; the sequence is MKFSLALLATVALATISQA. Residues 20–71 constitute a propeptide, activation peptide; that stretch reads APVEKQVAGKPFQLVKNPHYQANATRAIFRAEKKYARHTAIPEQGKTIVKSA. The Peptidase A1 domain occupies 89–391; the sequence is YYATVSVGTP…NQGVPEVQIA (303 aa). Residue Asp107 is part of the active site. A disulfide bond links Cys120 and Cys123. Asp288 is a catalytic residue. A disulfide bridge connects residues Cys322 and Cys355.

The protein belongs to the peptidase A1 family. As to quaternary structure, monomer.

Hydrolysis of proteins with a broad specificity. Residues recognized to be cleaved were primarily those of trypsin and chymotrypsin and Lys was the most susceptible. This is Syncephapepsin (SPSR) from Syncephalastrum racemosum (Filamentous fungus).